The sequence spans 119 residues: Beta-2-microglobulin (119 aa).

An N-terminal signal peptide occupies residues 1-20 (MSPSVALAVLALLSLSGLEA). In terms of domain architecture, Ig-like C1-type spans 25–114 (PKIQVYSRHP…VTLSGPRTVK (90 aa)). Cys-45 and Cys-100 are joined by a disulfide.

The protein belongs to the beta-2-microglobulin family. As to quaternary structure, heterodimer of an alpha chain and a beta chain. Beta-2-microglobulin is the beta-chain of major histocompatibility complex class I molecules.

The protein localises to the secreted. In terms of biological role, component of the class I major histocompatibility complex (MHC). Involved in the presentation of peptide antigens to the immune system. This is Beta-2-microglobulin (B2M) from Macaca fascicularis (Crab-eating macaque).